We begin with the raw amino-acid sequence, 262 residues long: Small ribosomal subunit protein eS1y (262 aa).

Positions 1-18 (MAVGKNKRISKGRKGGKK) are enriched in basic residues. The interval 1 to 21 (MAVGKNKRISKGRKGGKKKAV) is disordered.

The protein belongs to the eukaryotic ribosomal protein eS1 family. Component of the small ribosomal subunit. Mature ribosomes consist of a small (40S) and a large (60S) subunit. The 40S subunit contains about 33 different proteins and 1 molecule of RNA (18S). The 60S subunit contains about 49 different proteins and 3 molecules of RNA (25S, 5.8S and 5S).

The protein resides in the cytoplasm. The sequence is that of Small ribosomal subunit protein eS1y from Arabidopsis thaliana (Mouse-ear cress).